Consider the following 436-residue polypeptide: Putative ankyrin repeat protein FPV026 (436 aa).

6 ANK repeats span residues 63 to 92, 101 to 130, 135 to 164, 168 to 197, 201 to 230, and 234 to 266; these read EGIR…NVNE, TCYS…DVNN, LRNT…DQNI, NGNI…NLEI, NGRT…LVDS, and EGYT…FLNI. The region spanning 409–436 is the F-box domain; sequence TSTITNLPYEVIYIIVEKMTNKELCEIR.

This chain is Putative ankyrin repeat protein FPV026, found in Fowlpox virus (strain NVSL) (FPV).